A 322-amino-acid chain; its full sequence is Phospholipase A1 (322 aa).

Residues 1 to 18 form the signal peptide; the sequence is MNFKYSILFICFGTLDRG. A disulfide bridge connects residues Cys-23 and Cys-106. The active-site Nucleophile is Ser-156. Asp-184 functions as the Charge relay system in the catalytic mechanism. Cystine bridges form between Cys-195–Cys-200 and Cys-238–Cys-246. His-248 serves as the catalytic Charge relay system. Cystine bridges form between Cys-263–Cys-290, Cys-264–Cys-315, and Cys-283–Cys-288.

Belongs to the AB hydrolase superfamily. Lipase family. Contains six disulfide bonds. Post-translationally, is not glycosylated. In terms of tissue distribution, expressed by the venom gland.

It localises to the secreted. It catalyses the reaction a 1,2-diacyl-sn-glycero-3-phosphocholine + H2O = a 2-acyl-sn-glycero-3-phosphocholine + a fatty acid + H(+). Functionally, catalyzes the hydrolysis of phosphatidylcholine with phospholipase A1 activity. Shows hemolytic activity. Acts as an allergen. The protein is Phospholipase A1 of Polybia paulista (Neotropical social wasp).